Here is a 460-residue protein sequence, read N- to C-terminus: Ecdysteroid UDP-glucosyltransferase (460 aa).

Residues 1–18 (MFISILLLALAVERILCA) form the signal peptide.

The protein belongs to the UDP-glycosyltransferase family.

Catalyzes the transfer of glucose from UDP-glucose to ecdysteroids which are insect molting hormones. Expression of egt interferes with normal insect development and block molting. This chain is Ecdysteroid UDP-glucosyltransferase (EGT), found in Lacanobia oleracea granulosis virus (LoGV).